Consider the following 463-residue polypeptide: Elongation factor 1-alpha (463 aa).

Residues 5–242 (KVHINIVVIG…DSIIPPQRPT (238 aa)) form the tr-type G domain. The G1 stretch occupies residues 14 to 21 (GHVDSGKS). 14–21 (GHVDSGKS) is a GTP binding site. The segment at 70–74 (GITID) is G2. Residues 91-94 (DAPG) form a G3 region. Residues 91 to 95 (DAPGH) and 153 to 156 (NKMD) contribute to the GTP site. A G4 region spans residues 153–156 (NKMD). A G5 region spans residues 194 to 196 (SGF). A 5-glutamyl glycerylphosphorylethanolamine mark is found at Glu301 and Glu374. Positions 443–463 (KSDGSSGKVTKSAQKAAPKKK) are disordered. A compositionally biased stretch (polar residues) spans 446 to 455 (GSSGKVTKSA).

It belongs to the TRAFAC class translation factor GTPase superfamily. Classic translation factor GTPase family. EF-Tu/EF-1A subfamily.

It is found in the cytoplasm. In terms of biological role, this protein promotes the GTP-dependent binding of aminoacyl-tRNA to the A-site of ribosomes during protein biosynthesis. In Caenorhabditis elegans, this protein is Elongation factor 1-alpha.